A 267-amino-acid chain; its full sequence is Putative metal-binding protein TM_0123 (267 aa).

The signal sequence occupies residues 1-15 (MKKILLLLVLIVAVL). A divalent metal cation-binding residues include H53, H107, and H172.

This sequence belongs to the bacterial solute-binding protein 9 family.

The protein localises to the periplasm. Its function is as follows. Part of an ATP-binding cassette (ABC) transport system involved in metal import. Binds a metal with high affinity and specificity and delivers it to the membrane permease for translocation into the cytoplasm. This chain is Putative metal-binding protein TM_0123, found in Thermotoga maritima (strain ATCC 43589 / DSM 3109 / JCM 10099 / NBRC 100826 / MSB8).